A 214-amino-acid chain; its full sequence is Phosphatidylserine decarboxylase proenzyme (214 aa).

Residue serine 182 is the Schiff-base intermediate with substrate; via pyruvic acid of the active site. A Pyruvic acid (Ser); by autocatalysis modification is found at serine 182.

It belongs to the phosphatidylserine decarboxylase family. PSD-A subfamily. As to quaternary structure, heterodimer of a large membrane-associated beta subunit and a small pyruvoyl-containing alpha subunit. It depends on pyruvate as a cofactor. Is synthesized initially as an inactive proenzyme. Formation of the active enzyme involves a self-maturation process in which the active site pyruvoyl group is generated from an internal serine residue via an autocatalytic post-translational modification. Two non-identical subunits are generated from the proenzyme in this reaction, and the pyruvate is formed at the N-terminus of the alpha chain, which is derived from the carboxyl end of the proenzyme. The post-translation cleavage follows an unusual pathway, termed non-hydrolytic serinolysis, in which the side chain hydroxyl group of the serine supplies its oxygen atom to form the C-terminus of the beta chain, while the remainder of the serine residue undergoes an oxidative deamination to produce ammonia and the pyruvoyl prosthetic group on the alpha chain.

Its subcellular location is the cell membrane. The catalysed reaction is a 1,2-diacyl-sn-glycero-3-phospho-L-serine + H(+) = a 1,2-diacyl-sn-glycero-3-phosphoethanolamine + CO2. Its pathway is phospholipid metabolism; phosphatidylethanolamine biosynthesis; phosphatidylethanolamine from CDP-diacylglycerol: step 2/2. Catalyzes the formation of phosphatidylethanolamine (PtdEtn) from phosphatidylserine (PtdSer). In Burkholderia lata (strain ATCC 17760 / DSM 23089 / LMG 22485 / NCIMB 9086 / R18194 / 383), this protein is Phosphatidylserine decarboxylase proenzyme.